Reading from the N-terminus, the 505-residue chain is Acetyl-coenzyme A carboxylase carboxyl transferase subunit beta, chloroplastic (505 aa).

A compositionally biased stretch (low complexity) spans 189 to 205 (ESVSNSKSGSSSIRTGG). Residues 189–213 (ESVSNSKSGSSSIRTGGNSSDFNRR) are disordered. In terms of domain architecture, CoA carboxyltransferase N-terminal spans 228–499 (LWVQCENCYG…NQNSSRALGS (272 aa)). Cysteine 232, cysteine 235, cysteine 251, and cysteine 254 together coordinate Zn(2+). The C4-type zinc finger occupies 232–254 (CENCYGLNYKKFVSFKMHICEQC).

It belongs to the AccD/PCCB family. As to quaternary structure, acetyl-CoA carboxylase is a heterohexamer composed of biotin carboxyl carrier protein, biotin carboxylase and 2 subunits each of ACCase subunit alpha and ACCase plastid-coded subunit beta (accD). The cofactor is Zn(2+).

The protein resides in the plastid. It is found in the chloroplast stroma. The enzyme catalyses N(6)-carboxybiotinyl-L-lysyl-[protein] + acetyl-CoA = N(6)-biotinyl-L-lysyl-[protein] + malonyl-CoA. The protein operates within lipid metabolism; malonyl-CoA biosynthesis; malonyl-CoA from acetyl-CoA: step 1/1. Its function is as follows. Component of the acetyl coenzyme A carboxylase (ACC) complex. Biotin carboxylase (BC) catalyzes the carboxylation of biotin on its carrier protein (BCCP) and then the CO(2) group is transferred by the transcarboxylase to acetyl-CoA to form malonyl-CoA. This Calycanthus floridus var. glaucus (Eastern sweetshrub) protein is Acetyl-coenzyme A carboxylase carboxyl transferase subunit beta, chloroplastic.